The following is a 258-amino-acid chain: Ribosomal RNA small subunit methyltransferase J (258 aa).

S-adenosyl-L-methionine contacts are provided by residues 104–105 (RD), 120–121 (ER), and Asp175.

This sequence belongs to the methyltransferase superfamily. RsmJ family.

The protein localises to the cytoplasm. The catalysed reaction is guanosine(1516) in 16S rRNA + S-adenosyl-L-methionine = N(2)-methylguanosine(1516) in 16S rRNA + S-adenosyl-L-homocysteine + H(+). In terms of biological role, specifically methylates the guanosine in position 1516 of 16S rRNA. The sequence is that of Ribosomal RNA small subunit methyltransferase J from Chromobacterium violaceum (strain ATCC 12472 / DSM 30191 / JCM 1249 / CCUG 213 / NBRC 12614 / NCIMB 9131 / NCTC 9757 / MK).